The primary structure comprises 147 residues: Large ribosomal subunit protein uL16 (147 aa).

The protein belongs to the universal ribosomal protein uL16 family. Part of the 50S ribosomal subunit.

Its function is as follows. Binds 23S rRNA and is also seen to make contacts with the A and possibly P site tRNAs. This Caldicellulosiruptor saccharolyticus (strain ATCC 43494 / DSM 8903 / Tp8T 6331) protein is Large ribosomal subunit protein uL16.